The sequence spans 123 residues: Large ribosomal subunit protein bL12 (123 aa).

This sequence belongs to the bacterial ribosomal protein bL12 family. In terms of assembly, homodimer. Part of the ribosomal stalk of the 50S ribosomal subunit. Forms a multimeric L10(L12)X complex, where L10 forms an elongated spine to which 2 to 4 L12 dimers bind in a sequential fashion. Binds GTP-bound translation factors.

Functionally, forms part of the ribosomal stalk which helps the ribosome interact with GTP-bound translation factors. Is thus essential for accurate translation. In Clostridium acetobutylicum (strain ATCC 824 / DSM 792 / JCM 1419 / IAM 19013 / LMG 5710 / NBRC 13948 / NRRL B-527 / VKM B-1787 / 2291 / W), this protein is Large ribosomal subunit protein bL12.